The sequence spans 460 residues: Cysteine--tRNA ligase (460 aa).

Cys28 serves as a coordination point for Zn(2+). A 'HIGH' region motif is present at residues 30 to 40 (MTVYDYCHLGH). Cys209, His234, and Glu238 together coordinate Zn(2+). The 'KMSKS' region signature appears at 266 to 270 (KMSKS). Residue Lys269 coordinates ATP.

The protein belongs to the class-I aminoacyl-tRNA synthetase family. As to quaternary structure, monomer. It depends on Zn(2+) as a cofactor.

The protein resides in the cytoplasm. It catalyses the reaction tRNA(Cys) + L-cysteine + ATP = L-cysteinyl-tRNA(Cys) + AMP + diphosphate. The sequence is that of Cysteine--tRNA ligase from Pseudomonas putida (strain W619).